A 488-amino-acid polypeptide reads, in one-letter code: Protein nucleotidyltransferase YdiU (488 aa).

Residues Gly91, Gly93, Arg94, Lys114, Asp126, Gly127, Arg177, and Arg184 each contribute to the ATP site. The interval 108 to 127 (RFDIQLKGSGPTPYSRRGDG) is disordered. Asp253 functions as the Proton acceptor in the catalytic mechanism. Asn254 and Asp263 together coordinate Mg(2+). Position 263 (Asp263) interacts with ATP.

It belongs to the SELO family. The cofactor is Mg(2+). It depends on Mn(2+) as a cofactor.

The catalysed reaction is L-seryl-[protein] + ATP = 3-O-(5'-adenylyl)-L-seryl-[protein] + diphosphate. It carries out the reaction L-threonyl-[protein] + ATP = 3-O-(5'-adenylyl)-L-threonyl-[protein] + diphosphate. It catalyses the reaction L-tyrosyl-[protein] + ATP = O-(5'-adenylyl)-L-tyrosyl-[protein] + diphosphate. The enzyme catalyses L-histidyl-[protein] + UTP = N(tele)-(5'-uridylyl)-L-histidyl-[protein] + diphosphate. The catalysed reaction is L-seryl-[protein] + UTP = O-(5'-uridylyl)-L-seryl-[protein] + diphosphate. It carries out the reaction L-tyrosyl-[protein] + UTP = O-(5'-uridylyl)-L-tyrosyl-[protein] + diphosphate. Its function is as follows. Nucleotidyltransferase involved in the post-translational modification of proteins. It can catalyze the addition of adenosine monophosphate (AMP) or uridine monophosphate (UMP) to a protein, resulting in modifications known as AMPylation and UMPylation. The protein is Protein nucleotidyltransferase YdiU of Bacillus cereus (strain AH820).